Here is a 366-residue protein sequence, read N- to C-terminus: Cobalt-precorrin-5B C(1)-methyltransferase (366 aa).

It belongs to the CbiD family.

It carries out the reaction Co-precorrin-5B + S-adenosyl-L-methionine = Co-precorrin-6A + S-adenosyl-L-homocysteine. It participates in cofactor biosynthesis; adenosylcobalamin biosynthesis; cob(II)yrinate a,c-diamide from sirohydrochlorin (anaerobic route): step 6/10. Its function is as follows. Catalyzes the methylation of C-1 in cobalt-precorrin-5B to form cobalt-precorrin-6A. The sequence is that of Cobalt-precorrin-5B C(1)-methyltransferase from Pseudomonas paraeruginosa (strain DSM 24068 / PA7) (Pseudomonas aeruginosa (strain PA7)).